The primary structure comprises 124 residues: Small ribosomal subunit protein uS12 (124 aa).

At D90 the chain carries 3-methylthioaspartic acid.

Belongs to the universal ribosomal protein uS12 family. In terms of assembly, part of the 30S ribosomal subunit. Contacts proteins S8 and S17. May interact with IF1 in the 30S initiation complex.

Its function is as follows. With S4 and S5 plays an important role in translational accuracy. In terms of biological role, interacts with and stabilizes bases of the 16S rRNA that are involved in tRNA selection in the A site and with the mRNA backbone. Located at the interface of the 30S and 50S subunits, it traverses the body of the 30S subunit contacting proteins on the other side and probably holding the rRNA structure together. The combined cluster of proteins S8, S12 and S17 appears to hold together the shoulder and platform of the 30S subunit. The polypeptide is Small ribosomal subunit protein uS12 (Wolbachia sp. subsp. Brugia malayi (strain TRS)).